The chain runs to 545 residues: Chaperonin GroEL 1 (545 aa).

ATP-binding positions include 30 to 33 (TLGP), lysine 51, 87 to 91 (DGTTT), glycine 415, and aspartate 495.

It belongs to the chaperonin (HSP60) family. In terms of assembly, forms a cylinder of 14 subunits composed of two heptameric rings stacked back-to-back. Interacts with the co-chaperonin GroES.

It is found in the cytoplasm. The catalysed reaction is ATP + H2O + a folded polypeptide = ADP + phosphate + an unfolded polypeptide.. Its function is as follows. Together with its co-chaperonin GroES, plays an essential role in assisting protein folding. The GroEL-GroES system forms a nano-cage that allows encapsulation of the non-native substrate proteins and provides a physical environment optimized to promote and accelerate protein folding. The chain is Chaperonin GroEL 1 from Rhizobium etli (strain ATCC 51251 / DSM 11541 / JCM 21823 / NBRC 15573 / CFN 42).